The primary structure comprises 422 residues: Hispidin-3-hydroxylase (422 aa).

The chain crosses the membrane as a helical span at residues 6–26 (NSLSVLIVGAGLGGLAAAIAL). FAD contacts are provided by alanine 50, arginine 108, and aspartate 318.

This sequence belongs to the paxM FAD-dependent monooxygenase family. In terms of assembly, monomer. FAD is required as a cofactor.

The protein localises to the membrane. It catalyses the reaction hispidin + NADH + O2 + H(+) = 3-hydroxyhispidin + NAD(+) + H2O. The enzyme catalyses hispidin + NADPH + O2 + H(+) = 3-hydroxyhispidin + NADP(+) + H2O. The protein operates within secondary metabolite biosynthesis. Hispidin-3-hydroxylase; part of the gene cluster that mediates the fungal bioluminescence cycle. Hydroxylates hispidin in order to produce the fungal luciferin 3-hydroxyhispidin. The fungal bioluminescence cycle begins with the hispidin synthetase that catalyzes the formation of hispidin which is further hydroxylated by the hispidin-3-hydroxylase, yielding the fungal luciferin 3-hydroxyhispidin. The luciferase then produces an endoperoxide as a high-energy intermediate with decomposition that yields oxyluciferin (also known as caffeoylpyruvate) and light emission. Oxyluciferin can be recycled to caffeic acid by caffeoylpyruvate hydrolase. In Neonothopanus nambi (Agaricus nambi), this protein is Hispidin-3-hydroxylase.